Here is a 388-residue protein sequence, read N- to C-terminus: Probable pectin lyase F-1 (388 aa).

Positions 1–19 are cleaved as a signal peptide; it reads MKTATFSTLLALSASAVNA. A disulfide bridge connects residues Cys-80 and Cys-103. The N-linked (GlcNAc...) asparagine glycan is linked to Asn-126. Arg-253 is an active-site residue. Cys-328 and Cys-336 are oxidised to a cystine.

This sequence belongs to the polysaccharide lyase 1 family.

The protein localises to the secreted. The catalysed reaction is Eliminative cleavage of (1-&gt;4)-alpha-D-galacturonan methyl ester to give oligosaccharides with 4-deoxy-6-O-methyl-alpha-D-galact-4-enuronosyl groups at their non-reducing ends.. Pectinolytic enzymes consist of four classes of enzymes: pectin lyase, polygalacturonase, pectin methylesterase and rhamnogalacturonase. Among pectinolytic enzymes, pectin lyase is the most important in depolymerization of pectin, since it cleaves internal glycosidic bonds of highly methylated pectins. The sequence is that of Probable pectin lyase F-1 (pelF-1) from Aspergillus terreus (strain NIH 2624 / FGSC A1156).